Reading from the N-terminus, the 858-residue chain is Protein VACUOLELESS1 (858 aa).

This sequence belongs to the VPS16 family. As to quaternary structure, core component of at least two putative endosomal tethering complexes, the homotypic fusion and vacuole protein sorting (HOPS) complex and the class C core vacuole/endosome tethering (CORVET) complex. Their common core is composed of the class C Vps proteins VPS11, VCL1, VPS18 and VPS33, which in HOPS further associates with VPS39 and VPS41 and in CORVET with VPS3. As to expression, expressed in roots, leaves, stems, siliques, flowers and mature pollen.

It localises to the vacuole membrane. It is found in the prevacuolar compartment membrane. Its function is as follows. Required for vacuole biogenesis and vacuole enlargment in dividing and expanding cells. Involved in the docking or fusion of prevacuolar vesicles. Important for the function of both male and female gametophytes, but is not essential for the germination and development of pollen. The protein is Protein VACUOLELESS1 (VCL1) of Arabidopsis thaliana (Mouse-ear cress).